Reading from the N-terminus, the 127-residue chain is Small ribosomal subunit protein bS6 (127 aa).

The disordered stretch occupies residues 101-127 (PMMKEEKARDLLQGAKADAPAEQPAAA). Residues 115-127 (AKADAPAEQPAAA) are compositionally biased toward low complexity.

It belongs to the bacterial ribosomal protein bS6 family.

Functionally, binds together with bS18 to 16S ribosomal RNA. This chain is Small ribosomal subunit protein bS6, found in Thiobacillus denitrificans (strain ATCC 25259 / T1).